The primary structure comprises 369 residues: RING-H2 finger protein ATL47 (369 aa).

A helical membrane pass occupies residues 52–72 (IILFIIVLLSVIFFICSILHL). An RING-type; atypical zinc finger spans residues 144–186 (CAVCLCEFSEDDKLRLLPNCSHAFHIDCIDTWLLSNSTCPLCR). The interval 332–355 (NNHPSETNLVVGGSSSSSSYVCSG) is disordered. Residues 341-355 (VVGGSSSSSSYVCSG) show a composition bias toward low complexity.

It belongs to the RING-type zinc finger family. ATL subfamily.

It localises to the membrane. The enzyme catalyses S-ubiquitinyl-[E2 ubiquitin-conjugating enzyme]-L-cysteine + [acceptor protein]-L-lysine = [E2 ubiquitin-conjugating enzyme]-L-cysteine + N(6)-ubiquitinyl-[acceptor protein]-L-lysine.. The protein operates within protein modification; protein ubiquitination. The polypeptide is RING-H2 finger protein ATL47 (ATL47) (Arabidopsis thaliana (Mouse-ear cress)).